Reading from the N-terminus, the 343-residue chain is Dihydroorotate dehydrogenase (quinone) (343 aa).

Residues 65-69 and threonine 89 contribute to the FMN site; that span reads AGFDK. Residue lysine 69 coordinates substrate. Position 114–118 (114–118) interacts with substrate; it reads NRMGF. FMN contacts are provided by asparagine 145 and asparagine 178. Substrate is bound at residue asparagine 178. Serine 181 (nucleophile) is an active-site residue. Asparagine 183 is a binding site for substrate. 2 residues coordinate FMN: lysine 215 and threonine 243. Residue 244-245 coordinates substrate; the sequence is NT. Residues glycine 269, glycine 298, and 319 to 320 contribute to the FMN site; that span reads YT.

It belongs to the dihydroorotate dehydrogenase family. Type 2 subfamily. Monomer. FMN is required as a cofactor.

The protein localises to the cell membrane. It catalyses the reaction (S)-dihydroorotate + a quinone = orotate + a quinol. Its pathway is pyrimidine metabolism; UMP biosynthesis via de novo pathway; orotate from (S)-dihydroorotate (quinone route): step 1/1. Functionally, catalyzes the conversion of dihydroorotate to orotate with quinone as electron acceptor. This Leifsonia xyli subsp. xyli (strain CTCB07) protein is Dihydroorotate dehydrogenase (quinone).